The chain runs to 247 residues: Large ribosomal subunit protein uL30 (247 aa).

At Met1 the chain carries N-acetylmethionine. Tandem repeats lie at residues Lys7–Leu17, Lys18–Ile29, Lys30–Leu41, and Arg42–Ala53. The 4 X 12 AA tandem repeats stretch occupies residues Lys7 to Ala53. Thr16 bears the Phosphothreonine mark. An N6-acetyllysine modification is found at Lys123. Lys126 carries the N6-succinyllysine modification. A Phosphotyrosine modification is found at Tyr138.

The protein belongs to the universal ribosomal protein uL30 family. As to quaternary structure, component of the large ribosomal subunit. Homodimer. Interacts with DHX33.

The protein resides in the cytoplasm. Functionally, component of the large ribosomal subunit. The ribosome is a large ribonucleoprotein complex responsible for the synthesis of proteins in the cell. Binds to G-rich structures in 28S rRNA and in mRNAs. Plays a regulatory role in the translation apparatus; inhibits cell-free translation of mRNAs. The polypeptide is Large ribosomal subunit protein uL30 (RPL7) (Pongo abelii (Sumatran orangutan)).